Here is a 143-residue protein sequence, read N- to C-terminus: MVAFFSKATKCGNGHLPADLRFGGAVYLKPSIGPSEAVVQRNSMDKLDFQNIDLVSEINKRRKAMATRDETITKKSGEGEEMLPSMGMDHESPSKAHLMVPPAPPPSPADAADINGFSFKIWEAGTSVNSDFNSWKANVSKFH.

The interval 65–111 (MATRDETITKKSGEGEEMLPSMGMDHESPSKAHLMVPPAPPPSPADA) is disordered. Residues 66–78 (ATRDETITKKSGE) are compositionally biased toward basic and acidic residues.

In Mus musculus (Mouse), this protein is Myocilin opposite strand protein.